The primary structure comprises 255 residues: MLKIGPYEFQSRLLLGTGKYPDLEVQKQAVEVSGAEILTFAVRRMNIFEPNQPNFLENLDLTKYKLLPNTAGAKTAEEAVRIARLAKASGLCDMIKVEVIGCEKTLLPDPVETLKATEILLEEGFIVLPYTSDDVVLAKRLQELGCHAVMPGASPIGSGQGIVNPLNLSLIIEQATVPVIVDAGIGSPADAAFAMELGADGVLLNTAVSGAADPVKMAKAMKLAVEAGRLGYEAGRIPKKRYATASSPMEGMSVV.

Lys96 functions as the Schiff-base intermediate with DXP in the catalytic mechanism. Residues Gly157, 183–184 (AG), and 205–206 (NT) contribute to the 1-deoxy-D-xylulose 5-phosphate site.

Belongs to the ThiG family. As to quaternary structure, homotetramer. Forms heterodimers with either ThiH or ThiS.

It localises to the cytoplasm. It carries out the reaction [ThiS sulfur-carrier protein]-C-terminal-Gly-aminoethanethioate + 2-iminoacetate + 1-deoxy-D-xylulose 5-phosphate = [ThiS sulfur-carrier protein]-C-terminal Gly-Gly + 2-[(2R,5Z)-2-carboxy-4-methylthiazol-5(2H)-ylidene]ethyl phosphate + 2 H2O + H(+). Its pathway is cofactor biosynthesis; thiamine diphosphate biosynthesis. Its function is as follows. Catalyzes the rearrangement of 1-deoxy-D-xylulose 5-phosphate (DXP) to produce the thiazole phosphate moiety of thiamine. Sulfur is provided by the thiocarboxylate moiety of the carrier protein ThiS. In vitro, sulfur can be provided by H(2)S. This chain is Thiazole synthase, found in Geobacillus sp. (strain WCH70).